Reading from the N-terminus, the 316-residue chain is Ribosomal RNA large subunit methyltransferase F (316 aa).

Belongs to the methyltransferase superfamily. METTL16/RlmF family.

It localises to the cytoplasm. The catalysed reaction is adenosine(1618) in 23S rRNA + S-adenosyl-L-methionine = N(6)-methyladenosine(1618) in 23S rRNA + S-adenosyl-L-homocysteine + H(+). Specifically methylates the adenine in position 1618 of 23S rRNA. The protein is Ribosomal RNA large subunit methyltransferase F of Pseudomonas putida (strain W619).